The chain runs to 782 residues: MERSDSRDLYNFVRASSLDKNSTLFDASQYEFFGQNLDDMELGGLDDDGVIAPVLGHADDDEYHLFDKGEGAGLGSLSDMDDLATTFAKLNRVVTGPKHPGVIGDRGSGSFSRESSSATDWTQDAELTSWLDEQDQEAKRWSSQPQSFAHSKPLYRTSSYPQQQPQLQHYNSEPIILPESNFTSFPPPGNRSPQASPGNLHRAPSLPGGSQLTYSAPSPLSNSGFHLSGLSQGPHYGGNLTRYASCGPTLGNMVQPHWVTDPGHLHGDHSGLLHNLVQQQHQQLPPRNAIMSQHLLALQQRQSYAQLAALQSQLYSSYPSPSRKVPFGVGEVREHKHKSSHRSRKNRGLSQQTSDAASQKSETGLQFRSKHMTSEEIESILKMQHSNSHSNDPYVNDYYHQAKLAKKSAGSKAISHFYPAQLKDHQPRSRNSSEQHPQVHVDALGKITLPSVRRPHALLEVDSSPGFNDGSGDHKGSGKHLEQEPLVAARVTIEDALGVLIDIVDIDRTLQNTRPQDGGAQLKRKRQILLEGLATALQLADPFSKTGQKSGMTAKDDIVFLRIATLPKGRKLLTKYLQLLVPGTENARVVCMAIFRHLRFLFGGLPSDTLAAETISNLAKAVTVCVQAMDLRALSACLAAVVCSSEQPPLRPIGSSAGDGASVVLISLLERAAEVVVVPRVMHGNSNDGLWRASFDEFFNLLTKYCRSKYDTIRGQNQGSAADVLELAIKREMPAELLRASLRHTNDDQRNYLLNFGRKPSAISESASHARGGQINSESVRG.

Disordered regions lie at residues 96–153 (GPKH…HSKP), 177–217 (LPES…YSAP), 332–372 (VREH…SKHM), and 460–481 (EVDS…GKHL). The segment covering 108–117 (SGSFSRESSS) has biased composition (low complexity). The segment covering 208 to 217 (GGSQLTYSAP) has biased composition (polar residues). The span at 335–347 (HKHKSSHRSRKNR) shows a compositional bias: basic residues. The segment covering 348–366 (GLSQQTSDAASQKSETGLQ) has biased composition (polar residues). Positions 471-481 (SGDHKGSGKHL) are enriched in basic and acidic residues.

In terms of assembly, interacts with AFPH2/NINJA. In terms of tissue distribution, expressed in root vasculature, shoot apical meristem (SAM) and leaves.

Activator of mRNA decapping. Involved in mRNA decay via decapping. Involved in the regulation of root stem cell niche identity. Maintains root stem cell niche stability through the interaction with the negative regulator of jasmonate signaling AFPH2/NINJA, and the regulation of cell division. This is Protein PAT1 homolog 1 from Arabidopsis thaliana (Mouse-ear cress).